The primary structure comprises 425 residues: tRNA(Met) cytidine acetate ligase (425 aa).

ATP is bound by residues 7–20, Gly-102, Asn-162, and 187–188; these read VVEY…HLHH and RI.

Belongs to the TmcAL family.

It localises to the cytoplasm. The enzyme catalyses cytidine(34) in elongator tRNA(Met) + acetate + ATP = N(4)-acetylcytidine(34) in elongator tRNA(Met) + AMP + diphosphate. Functionally, catalyzes the formation of N(4)-acetylcytidine (ac(4)C) at the wobble position of elongator tRNA(Met), using acetate and ATP as substrates. First activates an acetate ion to form acetyladenylate (Ac-AMP) and then transfers the acetyl group to tRNA to form ac(4)C34. This Fervidobacterium nodosum (strain ATCC 35602 / DSM 5306 / Rt17-B1) protein is tRNA(Met) cytidine acetate ligase.